The following is a 327-amino-acid chain: Lipoyl synthase (327 aa).

The [4Fe-4S] cluster site is built by C72, C77, C83, C98, C102, C105, and S313. In terms of domain architecture, Radical SAM core spans 83-302 (CWSHGTATIM…RKVGLEKGFL (220 aa)).

The protein belongs to the radical SAM superfamily. Lipoyl synthase family. [4Fe-4S] cluster is required as a cofactor.

It is found in the cytoplasm. The catalysed reaction is [[Fe-S] cluster scaffold protein carrying a second [4Fe-4S](2+) cluster] + N(6)-octanoyl-L-lysyl-[protein] + 2 oxidized [2Fe-2S]-[ferredoxin] + 2 S-adenosyl-L-methionine + 4 H(+) = [[Fe-S] cluster scaffold protein] + N(6)-[(R)-dihydrolipoyl]-L-lysyl-[protein] + 4 Fe(3+) + 2 hydrogen sulfide + 2 5'-deoxyadenosine + 2 L-methionine + 2 reduced [2Fe-2S]-[ferredoxin]. Its pathway is protein modification; protein lipoylation via endogenous pathway; protein N(6)-(lipoyl)lysine from octanoyl-[acyl-carrier-protein]: step 2/2. Its function is as follows. Catalyzes the radical-mediated insertion of two sulfur atoms into the C-6 and C-8 positions of the octanoyl moiety bound to the lipoyl domains of lipoate-dependent enzymes, thereby converting the octanoylated domains into lipoylated derivatives. The chain is Lipoyl synthase from Francisella tularensis subsp. holarctica (strain FTNF002-00 / FTA).